The primary structure comprises 295 residues: Glutamyl-Q tRNA(Asp) synthetase (295 aa).

L-glutamate contacts are provided by residues 9–13 (RFAPT) and Glu-45. A 'HIGH' region motif is present at residues 12–22 (PTPSGFLHFGS). Cys-101, Cys-103, Tyr-115, and Cys-119 together coordinate Zn(2+). The L-glutamate site is built by Tyr-172 and Arg-190. The 'KMSKS' region motif lies at 228-232 (KLGKS). Lys-231 is an ATP binding site.

It belongs to the class-I aminoacyl-tRNA synthetase family. GluQ subfamily. Zn(2+) serves as cofactor.

In terms of biological role, catalyzes the tRNA-independent activation of glutamate in presence of ATP and the subsequent transfer of glutamate onto a tRNA(Asp). Glutamate is transferred on the 2-amino-5-(4,5-dihydroxy-2-cyclopenten-1-yl) moiety of the queuosine in the wobble position of the QUC anticodon. The protein is Glutamyl-Q tRNA(Asp) synthetase of Pseudomonas putida (strain W619).